The following is a 537-amino-acid chain: Cytochrome P450 monooxygenase ltmQ (537 aa).

The helical transmembrane segment at 10-30 threads the bilayer; sequence FPKLNFATIVISGATIIGIIF. N182, N188, and N310 each carry an N-linked (GlcNAc...) asparagine glycan. Position 476 (C476) interacts with heme.

It belongs to the cytochrome P450 family. Heme serves as cofactor.

Its subcellular location is the membrane. Its pathway is secondary metabolite biosynthesis. Its function is as follows. Cytochrome P450 monooxygenase; part of the gene clusters that mediates the biosynthesis of lolitrems, indole-diterpene mycotoxins that are potent tremorgens in mammals, and are synthesized by clavicipitaceous fungal endophytes in association with their grass hosts. The geranylgeranyl diphosphate (GGPP) synthase ltmG is proposed to catalyze the first step in lolitrem biosynthesis. LtmG catalyzes a series of iterative condensations of isopentenyl diphosphate (IPP) with dimethylallyl diphosphate (DMAPP), geranyl diphosphate (GPP), and farnesyl diphosphate (FPP), to form GGPP. GGPP then condenses with indole-3-glycerol phosphate to form 3-geranylgeranylindole, an acyclic intermediate, to be incorporated into paxilline. Either ltmG or ltmC could be responsible for this step, as both are putative prenyl transferases. The FAD-dependent monooxygenase ltmM then catalyzes the epoxidation of the two terminal alkenes of the geranylgeranyl moiety, which is subsequently cyclized by ltmB, to paspaline. The cytochrome P450 monooxygenases ltmQ and ltmP can sequentially oxidize paspaline to terpendole E and terpendole F. Alternatively, ltmP converts paspaline to an intermediate which is oxidized by ltmQ to terpendole F. LtmF, ltmK, ltmE and ltmJ appear to be unique to the epichloe endophytes. The prenyltransferase ltmF is involved in the 27-hydroxyl-O-prenylation. The cytochrome P450 monooxygenase ltmK is required for the oxidative acetal ring formation. The multi-functional prenyltransferase ltmE is required for C20- and C21-prenylations of the indole ring of paspalanes and acts together with the cytochrome P450 monooxygenase ltmJ to yield lolitremanes by multiple oxidations and ring closures. The stereoisomer pairs of lolitriol and lolitrem N or lolitrem B and lolitrem F may be attributed to variations in the way in which ring closure can occur under the action of ltmJ. While the major product of this pathway is lolitrem B, the prenyl transferases and cytochrome P450 monooxygenases identified in this pathway have a remarkable versatility in their regio- and stereo-specificities to generate a diverse range of metabolites that are products of a metabolic grid rather than a linear pathway. This is Cytochrome P450 monooxygenase ltmQ from Epichloe festucae var. lolii (Neotyphodium lolii).